Consider the following 153-residue polypeptide: Deoxyuridine 5'-triphosphate nucleotidohydrolase (153 aa).

Substrate is bound by residues 71–73 (RSG), Asn84, 88–90 (TID), and Lys98.

The protein belongs to the dUTPase family. It depends on Mg(2+) as a cofactor.

The enzyme catalyses dUTP + H2O = dUMP + diphosphate + H(+). The protein operates within pyrimidine metabolism; dUMP biosynthesis; dUMP from dCTP (dUTP route): step 2/2. In terms of biological role, this enzyme is involved in nucleotide metabolism: it produces dUMP, the immediate precursor of thymidine nucleotides and it decreases the intracellular concentration of dUTP so that uracil cannot be incorporated into DNA. This chain is Deoxyuridine 5'-triphosphate nucleotidohydrolase, found in Wolbachia sp. subsp. Drosophila simulans (strain wRi).